The primary structure comprises 223 residues: Pyridoxine/pyridoxamine 5'-phosphate oxidase (223 aa).

Residues 9–12 (RVGY) and K76 each bind substrate. FMN-binding positions include 71–76 (RTVLCK), 86–87 (FT), K93, and Q115. Positions 133, 137, and 141 each coordinate substrate. Residues 150–151 (QS) and W196 each bind FMN. 202–204 (RMH) contributes to the substrate binding site. R206 is an FMN binding site.

Belongs to the pyridoxamine 5'-phosphate oxidase family. In terms of assembly, homodimer. Requires FMN as cofactor.

It carries out the reaction pyridoxamine 5'-phosphate + O2 + H2O = pyridoxal 5'-phosphate + H2O2 + NH4(+). The enzyme catalyses pyridoxine 5'-phosphate + O2 = pyridoxal 5'-phosphate + H2O2. It participates in cofactor metabolism; pyridoxal 5'-phosphate salvage; pyridoxal 5'-phosphate from pyridoxamine 5'-phosphate: step 1/1. Its pathway is cofactor metabolism; pyridoxal 5'-phosphate salvage; pyridoxal 5'-phosphate from pyridoxine 5'-phosphate: step 1/1. Catalyzes the oxidation of either pyridoxine 5'-phosphate (PNP) or pyridoxamine 5'-phosphate (PMP) into pyridoxal 5'-phosphate (PLP). This is Pyridoxine/pyridoxamine 5'-phosphate oxidase from Rhodococcus jostii (strain RHA1).